The primary structure comprises 535 residues: T-complex protein 1 subunit epsilon (535 aa).

This sequence belongs to the TCP-1 chaperonin family. Heterooligomeric complex of about 850 to 900 kDa that forms two stacked rings, 12 to 16 nm in diameter.

It is found in the cytoplasm. In terms of biological role, molecular chaperone; assists the folding of proteins upon ATP hydrolysis. Known to play a role, in vitro, in the folding of actin and tubulin. This is T-complex protein 1 subunit epsilon from Avena sativa (Oat).